The following is a 24-amino-acid chain: L-amino-acid oxidase (24 aa).

Belongs to the flavin monoamine oxidase family. FIG1 subfamily. In terms of assembly, homodimer; non-covalently linked. Requires FAD as cofactor. N-glycosylated. Expressed by the venom gland.

It localises to the secreted. It catalyses the reaction an L-alpha-amino acid + O2 + H2O = a 2-oxocarboxylate + H2O2 + NH4(+). Catalyzes an oxidative deamination of predominantly hydrophobic and aromatic L-amino acids, thus producing hydrogen peroxide that may contribute to the diverse toxic effects of this enzyme. Exhibits diverse biological activities, such as hemorrhage, hemolysis, edema, apoptosis, and antiparasitic activities. This protein has antibacterial activity (against E.coli, S.aureus, and B.dysenteriae), cytotoxic activity, as well as an ability to induce platelet aggregation. Effects of snake L-amino oxidases on platelets are controversial, since they either induce aggregation or inhibit agonist-induced aggregation. These different effects are probably due to different experimental conditions. In Protobothrops mucrosquamatus (Taiwan habu), this protein is L-amino-acid oxidase.